A 1318-amino-acid polypeptide reads, in one-letter code: MEDRGRETQMPVARYGGPFIMVRLFGQDGEANIQEQRLYELLSDPRSALGLDPGPLIAENLLLVALRGTNNDPRPQRQERARELALVGILLGNGEQGEHLGTESALEASGNNYVYAYGPDWMARPSTWSAEIQQFLRLLGATYVLRVEMGRQFGFEVHRSRPSFRQFQAINHLVLFDNALRKYDSGQVAAGFQRALLVAGPETADTRPDLRKLNEWVFGGRAAGGRQLADELKIVSALRDTYSGHLVLQPTETLDTWKVLSRDTRTAHSLEHGFIHAAGTIQANCPQLFMRRQHPGLFPFVSAIASSLGWYYQTATGPGADARAAARRQQAFQTRAAAECHAKSGVPVVAGFYRTINATLKGGEGLQPTMFNGELGAIKHQALDTVRYDYGHYLIMLGPFQPWSGLTAPPCPYAESSWAQAAVQTALELFSALYPAPCISGYARPPGPSAVIEHLGSLVPKGGLLLFLSHLPDDVKDGLGEMGPARATGPGMQQFVSSYFLNPACSNVFITVRQRGEKINGRTVLQALGRACDMAGCQHYVLGSTVPLGGLNFVNDLASPVSTAEMMDDFSPFFTVEFPPIQEEGARSPVPLDVDESMDISPSYELPWLSLESCLTSILSHPTVGSKEHLVRHTDRVSGGRVAQQPGVGPLDLPLADYAFVAHSQVWTRPGGAPPLPYRTWDRMTEKLLVSAKPGGENVKVSGTVITLGEQGYKVSLDLREGTRLAMAEALLNAAFAPILDPEDVLLTLHLHLDPRRADNSVVMEAMTAASDYARGLGVKLTFGSASCPETGSSASSFMTVVASVSAPGEFSGPLITPVLQKTGSLLIAVRCGDGKIQGGSLFEQLFSDVATTPRAPEALSLKNLFRAVQQLVKSGIVLSGHDISDGGLVTCLVEMALAGQRGVTITMPVASDYLPEMFAEHPGLVFEVEERSVGEVLQTLRSMNMYPAVLGRVGEQGPDQMFEVQHGPETVLRQSLRLLLGTWSSFASEQYECLRPDRINRSMHVSDYGYNEALAVSPLTGKNLSPRRLVTEPDPRCQVAVLCAPGTRGHESLLAAFTNAGCLCRRVFFREVRDNTFLDKYVGLAIGGVHGARDSALAGRATVALINRSPALRDAILKFLNRPDTFSVALGELGVQVLAGLGAVGSTDNPPAPGVEVNVQRSPLILAPNASGMFESRWLNISIPATTSSVMLRGLRGCVLPCWVQGSCLGLQFTNLGMPYVLQNAHQIACHFHSNGTDAWRFAMNYPRNPTEQGNIAGLCSRDGRHLALLCDPSLCTDFWQWEHIPPAFGHPTGCSPWTLMFQAAHLWSLRHGRPSE.

The protein belongs to the herpesviridae MTP family. In terms of assembly, interacts with host DAXX; this interaction disrupts the chromatin remodeling complex ATRX:DAXX and thus allows viral transcription. Interacts with host SMC6; this interaction targets SMC5-SMC6 complex for proteasomal degradation.

It is found in the virion tegument. It localises to the host nucleus. Tegument protein that plays a role in the inhibition of host intrinsic defenses to promote viral early gene activation. Interacts with host DAXX and thereby disrupts the complex between DAXX and ATRX. Suppresses the DAXX-ATRX dependent deposition of histone H3.3 on viral chromatin allowing viral transcription. Targets also host SMC5/6 for proteasomal degradation in a CUL7 and calpain-dependent manner to support nuclear membrane-less replication compartment formation and lytic virus replication. The chain is Major tegument protein from Homo sapiens (Human).